Reading from the N-terminus, the 447-residue chain is Tubulin beta chain (447 aa).

GTP-binding residues include glutamine 11, glutamate 69, serine 138, glycine 142, threonine 143, glycine 144, asparagine 204, and asparagine 226. Residue glutamate 69 participates in Mg(2+) binding. A disordered region spans residues 424 to 447 (QYQEASVSEGEEEYDEEAPLEGEE). Acidic residues predominate over residues 432–447 (EGEEEYDEEAPLEGEE).

Belongs to the tubulin family. Dimer of alpha and beta chains. A typical microtubule is a hollow water-filled tube with an outer diameter of 25 nm and an inner diameter of 15 nM. Alpha-beta heterodimers associate head-to-tail to form protofilaments running lengthwise along the microtubule wall with the beta-tubulin subunit facing the microtubule plus end conferring a structural polarity. Microtubules usually have 13 protofilaments but different protofilament numbers can be found in some organisms and specialized cells. Mg(2+) is required as a cofactor.

Its subcellular location is the cytoplasm. The protein localises to the cytoskeleton. Tubulin is the major constituent of microtubules, a cylinder consisting of laterally associated linear protofilaments composed of alpha- and beta-tubulin heterodimers. Microtubules grow by the addition of GTP-tubulin dimers to the microtubule end, where a stabilizing cap forms. Below the cap, tubulin dimers are in GDP-bound state, owing to GTPase activity of alpha-tubulin. The polypeptide is Tubulin beta chain (Venturia inaequalis (Apple scab fungus)).